A 335-amino-acid chain; its full sequence is Methionine import ATP-binding protein MetN 1 (335 aa).

The 241-residue stretch at 2–242 (IEFHNVHKTY…PQHATTRRFV (241 aa)) folds into the ABC transporter domain. Position 38-45 (38-45 (GHSGAGKS)) interacts with ATP.

It belongs to the ABC transporter superfamily. Methionine importer (TC 3.A.1.24) family. As to quaternary structure, the complex is composed of two ATP-binding proteins (MetN), two transmembrane proteins (MetI) and a solute-binding protein (MetQ).

Its subcellular location is the cell inner membrane. The enzyme catalyses L-methionine(out) + ATP + H2O = L-methionine(in) + ADP + phosphate + H(+). It catalyses the reaction D-methionine(out) + ATP + H2O = D-methionine(in) + ADP + phosphate + H(+). Its function is as follows. Part of the ABC transporter complex MetNIQ involved in methionine import. Responsible for energy coupling to the transport system. The chain is Methionine import ATP-binding protein MetN 1 from Pseudomonas syringae pv. syringae (strain B728a).